Reading from the N-terminus, the 337-residue chain is DNA-directed RNA polymerase subunit alpha (337 aa).

Residues 1–233 (MIQKNWQELI…DQLSIFVNFE (233 aa)) form an alpha N-terminal domain (alpha-NTD) region. Residues 249–337 (FNPALLKKVD…DLAKRYEDQY (89 aa)) form an alpha C-terminal domain (alpha-CTD) region.

This sequence belongs to the RNA polymerase alpha chain family. Homodimer. The RNAP catalytic core consists of 2 alpha, 1 beta, 1 beta' and 1 omega subunit. When a sigma factor is associated with the core the holoenzyme is formed, which can initiate transcription.

It carries out the reaction RNA(n) + a ribonucleoside 5'-triphosphate = RNA(n+1) + diphosphate. Its function is as follows. DNA-dependent RNA polymerase catalyzes the transcription of DNA into RNA using the four ribonucleoside triphosphates as substrates. This chain is DNA-directed RNA polymerase subunit alpha, found in Brucella abortus (strain S19).